Here is a 188-residue protein sequence, read N- to C-terminus: Methylated-DNA--protein-cysteine methyltransferase (188 aa).

Residues Tyr-120, Gly-121, and Arg-134 each contribute to the DNA site. Cys-151 functions as the Nucleophile; methyl group acceptor in the catalytic mechanism. Residue Ser-157 coordinates DNA.

This sequence belongs to the MGMT family.

The protein resides in the nucleus. It carries out the reaction a 6-O-methyl-2'-deoxyguanosine in DNA + L-cysteinyl-[protein] = S-methyl-L-cysteinyl-[protein] + a 2'-deoxyguanosine in DNA. The catalysed reaction is a 4-O-methyl-thymidine in DNA + L-cysteinyl-[protein] = a thymidine in DNA + S-methyl-L-cysteinyl-[protein]. Functionally, involved in the cellular defense against the biological effects of O6-methylguanine (O6-MeG) and O4-methylthymine (O4-MeT) in DNA. Repairs the methylated nucleobase in DNA by stoichiometrically transferring the methyl group to a cysteine residue in the enzyme. This is a suicide reaction: the enzyme is irreversibly inactivated. Prefers double-stranded DNA over single-stranded DNA as substrate. The polypeptide is Methylated-DNA--protein-cysteine methyltransferase (MGT1) (Saccharomyces cerevisiae (strain ATCC 204508 / S288c) (Baker's yeast)).